We begin with the raw amino-acid sequence, 455 residues long: Glutamyl-tRNA reductase (455 aa).

Residues 49–52 (TCNR), Ser109, 114–116 (ETQ), and Gln120 each bind substrate. The active-site Nucleophile is Cys50. Residue 189–194 (GAGKMG) participates in NADP(+) binding.

The protein belongs to the glutamyl-tRNA reductase family. As to quaternary structure, homodimer.

The enzyme catalyses (S)-4-amino-5-oxopentanoate + tRNA(Glu) + NADP(+) = L-glutamyl-tRNA(Glu) + NADPH + H(+). The protein operates within porphyrin-containing compound metabolism; protoporphyrin-IX biosynthesis; 5-aminolevulinate from L-glutamyl-tRNA(Glu): step 1/2. Its function is as follows. Catalyzes the NADPH-dependent reduction of glutamyl-tRNA(Glu) to glutamate 1-semialdehyde (GSA). This is Glutamyl-tRNA reductase from Bacillus subtilis (strain 168).